The following is a 141-amino-acid chain: Elongation factor G, chloroplastic (141 aa).

Positions 12-141 (KDYRNIGIMA…VPRICFVNKM (130 aa)) constitute a tr-type G domain. Residues 21 to 28 (AHIDAGKT) and 85 to 89 (DTPGH) each bind GTP.

Belongs to the TRAFAC class translation factor GTPase superfamily. Classic translation factor GTPase family. EF-G/EF-2 subfamily.

It localises to the plastid. The protein resides in the chloroplast. It functions in the pathway protein biosynthesis; polypeptide chain elongation. Functionally, chloroplast-localized elongation factor EF-G involved in protein synthesis in plastids. Catalyzes the GTP-dependent ribosomal translocation step during translation elongation. During this step, the ribosome changes from the pre-translocational (PRE) to the post-translocational (POST) state as the newly formed A-site-bound peptidyl-tRNA and P-site-bound deacylated tRNA move to the P and E sites, respectively. Catalyzes the coordinated movement of the two tRNA molecules, the mRNA and conformational changes in the ribosome. In Pisum sativum (Garden pea), this protein is Elongation factor G, chloroplastic (fusA).